Reading from the N-terminus, the 223-residue chain is Deoxyribose-phosphate aldolase (223 aa).

The Proton donor/acceptor role is filled by D92. K154 functions as the Schiff-base intermediate with acetaldehyde in the catalytic mechanism. K182 functions as the Proton donor/acceptor in the catalytic mechanism.

Belongs to the DeoC/FbaB aldolase family. DeoC type 1 subfamily.

Its subcellular location is the cytoplasm. The catalysed reaction is 2-deoxy-D-ribose 5-phosphate = D-glyceraldehyde 3-phosphate + acetaldehyde. It functions in the pathway carbohydrate degradation; 2-deoxy-D-ribose 1-phosphate degradation; D-glyceraldehyde 3-phosphate and acetaldehyde from 2-deoxy-alpha-D-ribose 1-phosphate: step 2/2. Its function is as follows. Catalyzes a reversible aldol reaction between acetaldehyde and D-glyceraldehyde 3-phosphate to generate 2-deoxy-D-ribose 5-phosphate. This is Deoxyribose-phosphate aldolase from Haemophilus influenzae (strain PittEE).